A 335-amino-acid chain; its full sequence is 3-isopropylmalate dehydrogenase (335 aa).

Substrate is bound by residues Arg87, Arg97, Arg121, and Asp211. Residues Asp211, Asp235, and Asp239 each contribute to the Mg(2+) site. Residue 271–283 (GSAPDIAGQSKAD) coordinates NAD(+).

Belongs to the isocitrate and isopropylmalate dehydrogenases family. LeuB type 2 subfamily. Homodimer. Requires Mg(2+) as cofactor. The cofactor is Mn(2+).

The protein resides in the cytoplasm. It carries out the reaction (2R,3S)-3-isopropylmalate + NAD(+) = 4-methyl-2-oxopentanoate + CO2 + NADH. The protein operates within amino-acid biosynthesis; L-leucine biosynthesis; L-leucine from 3-methyl-2-oxobutanoate: step 3/4. Catalyzes the oxidation of 3-carboxy-2-hydroxy-4-methylpentanoate (3-isopropylmalate) to 3-carboxy-4-methyl-2-oxopentanoate. The product decarboxylates to 4-methyl-2 oxopentanoate. The protein is 3-isopropylmalate dehydrogenase of Nocardia farcinica (strain IFM 10152).